The following is a 315-amino-acid chain: Olfactory receptor 10H5 (315 aa).

The Extracellular segment spans residues 1–25 (MQGLNHTSVSEFILVGFSAFPHLQL). N-linked (GlcNAc...) asparagine glycosylation is present at Asn-5. A helical membrane pass occupies residues 26 to 46 (MLFLLFLLMYLFTLLGNLLIM). The Cytoplasmic portion of the chain corresponds to 47-54 (ATVWSERS). Residues 55-75 (LHMPMYLFLCALSITEILYTV) form a helical membrane-spanning segment. The Extracellular portion of the chain corresponds to 76–99 (AIIPRMLADLLSTQRSIAFLACAS). Residues Cys-97 and Cys-189 are joined by a disulfide bond. The helical transmembrane segment at 100 to 120 (QMFFSFSFGFTHSFLLTVMGY) threads the bilayer. Residues 121-139 (DRYVAICHPLRYNVLMSLR) lie on the Cytoplasmic side of the membrane. A helical membrane pass occupies residues 140-160 (GCTCRVGCSWAGGLVMGMVVT). At 161–197 (SAIFHLAFCGHKEIHHFFCHVPPLLKLACGDDVLVVA) the chain is on the extracellular side. A helical membrane pass occupies residues 198–218 (KGVGLVCITALLGCFLLILLS). The Cytoplasmic segment spans residues 219–238 (YAFIVAAILKIPSAEGRNKA). The chain crosses the membrane as a helical span at residues 239-259 (FSTCASHLTVVVVHYGFASVI). Over 260 to 272 (YLKPKGPQSPEGD) the chain is Extracellular. The helical transmembrane segment at 273 to 293 (TLMGITYTVLTPFLSPIIFSL) threads the bilayer. Over 294–315 (RNKELKVAMKKTCFTKLFPQNC) the chain is Cytoplasmic.

This sequence belongs to the G-protein coupled receptor 1 family.

The protein localises to the cell membrane. Odorant receptor. This chain is Olfactory receptor 10H5 (OR10H5), found in Homo sapiens (Human).